A 635-amino-acid polypeptide reads, in one-letter code: Biosynthetic arginine decarboxylase (635 aa).

At lysine 100 the chain carries N6-(pyridoxal phosphate)lysine. Substrate is bound at residue 282–292 (IDIGGGLGVDY).

The protein belongs to the Orn/Lys/Arg decarboxylase class-II family. SpeA subfamily. Mg(2+) serves as cofactor. Pyridoxal 5'-phosphate is required as a cofactor.

It catalyses the reaction L-arginine + H(+) = agmatine + CO2. It functions in the pathway amine and polyamine biosynthesis; agmatine biosynthesis; agmatine from L-arginine: step 1/1. Functionally, catalyzes the biosynthesis of agmatine from arginine. This Pelobacter propionicus (strain DSM 2379 / NBRC 103807 / OttBd1) protein is Biosynthetic arginine decarboxylase.